The sequence spans 495 residues: Mothers against decapentaplegic homolog 6 (495 aa).

A compositionally biased stretch (basic residues) spans 1–15 (MFRSKRSGLVRRLWR). Disordered stretches follow at residues 1-115 (MFRS…PGWL) and 133-161 (AAGAPRDSGDPQARQSPEPEEGGGPRSRE). A dimethylated arginine; alternate mark is found at Arg-74 and Arg-81. Residues Arg-74 and Arg-81 each carry the omega-N-methylarginine; alternate modification. Positions 149–276 (PEPEEGGGPR…FSRLCGPESP (128 aa)) constitute an MH1 domain. Lys-174 participates in a covalent cross-link: Glycyl lysine isopeptide (Lys-Gly) (interchain with G-Cter in ubiquitin). Zn(2+) contacts are provided by Cys-206, Cys-248, Cys-261, and His-266. Positions 332–495 (WCSVAYWEHR…WLEILLNNHR (164 aa)) constitute an MH2 domain. Residue Ser-436 is modified to Phosphoserine; by PRKX; in vitro.

The protein belongs to the dwarfin/SMAD family. In terms of assembly, interacts with NEDD4L. Interacts with WWP1. Interacts with STAMBP and PRKX. Interacts with RNF111 and AXIN1. Interacts with TGF-beta type I receptor superfamily members, including ACVR1B, BMPR1B and TGFBR1. In response to BMP2 treatment, interacts with SMAD1; this interaction may inhibit SMAD1-binding to SMAD4. Interacts with HOXC8 and HOXC9. Interacts with PELI1; this interaction interferes with PELI1 complex formation with TRAF6, IRAK1, IRAK4 and MYD88 in response to IL1B and hence negatively regulates IL1R-TLR signaling. Interacts with TSC22D1/TSC-22. In terms of processing, monoubiquitinated at Lys-174 by the E2/E3 hybrid ubiquitin-protein ligase UBE2O, leading to reduced binding affinity for the activated BMP type I receptor ACVR1/ALK2, thereby enhancing BMP7 and regulating adipocyte differentiation. Ubiquitinated by WWP1. Ubiquitinated by ARK2C, promoting proteasomal degradation, leading to enhance the BMP-Smad signaling. Post-translationally, arginine methylation by PRMT1, which is recruited by BMPR2, initiates BMP-Induced signaling and induces dissociation from the BMPR1B receptor at the cell surface leading to derepress downstream Smad1/Smad5 signaling. Phosphorylated by BMP type 1 receptor kinase and by PRKX. As to expression, ubiquitous in various organs, with higher levels in lung.

The protein localises to the nucleus. Transforming growth factor-beta superfamily receptors signaling occurs through the Smad family of intracellular mediators. SMAD6 is an inhibitory Smad (i-Smad) that negatively regulates signaling downstream of type I transforming growth factor-beta. Acts as a mediator of TGF-beta and BMP anti-inflammatory activities. Suppresses IL1R-TLR signaling through its direct interaction with PEL1, preventing NF-kappa-B activation, nuclear transport and NF-kappa-B-mediated expression of pro-inflammatory genes. Blocks the BMP-SMAD1 signaling pathway by competing with SMAD4 for receptor-activated SMAD1-binding. Binds to regulatory elements in target promoter regions. This is Mothers against decapentaplegic homolog 6 (Smad6) from Mus musculus (Mouse).